We begin with the raw amino-acid sequence, 151 residues long: Small heat shock protein HspD (151 aa).

Residues R28 to A138 enclose the sHSP domain.

The protein belongs to the small heat shock protein (HSP20) family.

In Bradyrhizobium diazoefficiens (strain JCM 10833 / BCRC 13528 / IAM 13628 / NBRC 14792 / USDA 110), this protein is Small heat shock protein HspD (hspD).